We begin with the raw amino-acid sequence, 601 residues long: Glutathione-regulated potassium-efflux system protein KefB (601 aa).

13 helical membrane passes run 4-24 (ADLL…VPLA), 29-49 (IGAV…GLGF), 55-75 (EILH…GLEL), 87-107 (IFGV…GLLM), 111-131 (FLWQ…TAMA), 152-172 (VLLF…LLAG), 177-197 (HFDW…LIGG), 207-227 (FIAA…LVLS), 230-250 (LFMD…GVLL), 262-282 (AIDP…GMSL), 284-304 (LGVL…LVVI), 324-344 (MQFA…FSTA), and 356-376 (ALLL…MKGI). Residues 400-519 (KPQVVVVGFG…AGVTQFSRET (120 aa)) form the RCK N-terminal domain.

The protein belongs to the monovalent cation:proton antiporter 2 (CPA2) transporter (TC 2.A.37) family. KefB subfamily. Interacts with the regulatory subunit KefG.

It is found in the cell inner membrane. Functionally, pore-forming subunit of a potassium efflux system that confers protection against electrophiles. Catalyzes K(+)/H(+) antiport. The sequence is that of Glutathione-regulated potassium-efflux system protein KefB from Salmonella typhi.